The primary structure comprises 242 residues: High mobility group protein homolog (242 aa).

2 DNA-binding regions (HMG box) span residues 54–122 (PKRN…EANK) and 126–197 (KPVK…IDKE).

It is found in the host nucleus. In Acheta domesticus (House cricket), this protein is High mobility group protein homolog (EF1).